The sequence spans 80 residues: Ubiquitin-like protein NEDD8-like protein 2 (80 aa).

Belongs to the ubiquitin family.

The sequence is that of Ubiquitin-like protein NEDD8-like protein 2 (nedd8l2) from Dictyostelium discoideum (Social amoeba).